Consider the following 300-residue polypeptide: 7-methylguanosine phosphate-specific 5'-nucleotidase (300 aa).

Catalysis depends on aspartate 41, which acts as the Nucleophile. 2 residues coordinate Mg(2+): aspartate 41 and aspartate 43. Aspartate 43 (proton donor) is an active-site residue. Glutamate 88 contributes to the CMP binding site. Glutamate 88 lines the N(7)-methyl-GMP pocket. Residues 156 to 157 (SA) and lysine 205 each bind substrate. Mg(2+) is bound at residue aspartate 230. N6-acetyllysine is present on lysine 256.

Belongs to the pyrimidine 5'-nucleotidase family. In terms of assembly, monomer.

It is found in the cytoplasm. The enzyme catalyses N(7)-methyl-GMP + H2O = N(7)-methylguanosine + phosphate. The catalysed reaction is CMP + H2O = cytidine + phosphate. It carries out the reaction a ribonucleoside 5'-phosphate + H2O = a ribonucleoside + phosphate. Specifically hydrolyzes 7-methylguanosine monophosphate (m(7)GMP) to 7-methylguanosine and inorganic phosphate. The specific activity for m(7)GMP may protect cells against undesired salvage of m(7)GMP and its incorporation into nucleic acids. Also has weak activity for CMP. UMP and purine nucleotides are poor substrates. The protein is 7-methylguanosine phosphate-specific 5'-nucleotidase (Nt5c3b) of Mus musculus (Mouse).